Consider the following 260-residue polypeptide: Late transcription factor 1 (260 aa).

The protein belongs to the chordopoxvirinae VLTF-1 family. In terms of assembly, interacts with the late transcription factors VLTF-2 and VLTF-3. Interacts with the late transcription elongation factor H5/VLTF-4. Interacts with itself.

Functionally, associates with RNA polymerase to initiate transcription from late gene promoters. The sequence is that of Late transcription factor 1 (VLTF1) from Vertebrata (FPV).